The sequence spans 462 residues: F-box/LRR-repeat protein At5g38396 (462 aa).

Positions 1-47 (MDLLRNIPDELICHILSFLTTKEAALTSVLSKRWRNLLAFVSNLHID) constitute an F-box domain. LRR repeat units lie at residues 118-146 (SIDL…KLHR), 148-175 (CIGQ…ELDY), 197-222 (VDAF…TMSS), 302-333 (CLDL…SIKS), and 334-359 (AENR…VLEG).

This is F-box/LRR-repeat protein At5g38396 from Arabidopsis thaliana (Mouse-ear cress).